We begin with the raw amino-acid sequence, 197 residues long: Nucleoid occlusion factor SlmA (197 aa).

The HTH tetR-type domain occupies 7-67 (INRREHILQC…GLIEFIEESL (61 aa)). The H-T-H motif DNA-binding region spans 30 to 49 (TTAKLAAEVGVSEAALYRHF). Positions 109 to 136 (DALLGENERLRSRISQLFSKIETHLKQI) form a coiled coil.

The protein belongs to the nucleoid occlusion factor SlmA family. As to quaternary structure, homodimer. Interacts with FtsZ.

The protein localises to the cytoplasm. Its subcellular location is the nucleoid. Functionally, required for nucleoid occlusion (NO) phenomenon, which prevents Z-ring formation and cell division over the nucleoid. Acts as a DNA-associated cell division inhibitor that binds simultaneously chromosomal DNA and FtsZ, and disrupts the assembly of FtsZ polymers. SlmA-DNA-binding sequences (SBS) are dispersed on non-Ter regions of the chromosome, preventing FtsZ polymerization at these regions. This chain is Nucleoid occlusion factor SlmA, found in Shewanella pealeana (strain ATCC 700345 / ANG-SQ1).